Consider the following 174-residue polypeptide: Early E1A protein (174 aa).

Residues 40-48 (PSLHDLFDL) form an interaction with RB1 in competition with E2F1 region. Positions 106 to 110 (LLCLE) match the LXCXE motif, interaction with host RB1 motif. A zinc finger lies at 145-163 (CLRCAYYQEQGENSICGLC).

This sequence belongs to the adenoviridae E1A protein family. Interacts with host UBE2I; this interaction interferes with polySUMOylation. Interacts with host RB1; this interaction induces the aberrant dissociation of RB1-E2F1 complex thereby disrupting the activity of RB1 and activating E2F1-regulated genes. Interacts with host ATF7; the interaction enhances ATF7-mediated viral transactivation activity which requires the zinc binding domains of both proteins. Isoform early E1A 32 kDa protein and isoform early E1A 26 kDa protein interact (via N-terminus) with CUL1 and E3 ubiquitin ligase RBX1; these interactions inhibit RBX1-CUL1-dependent elongation reaction of ubiquitin chains and attenuate ubiquitination of SCF(FBXW7) target proteins. Interacts (via PXLXP motif) with host ZMYND11/BS69 (via MYND-type zinc finger); this interaction inhibits E1A mediated transactivation. Interacts with host EP300; this interaction stimulates the acetylation of RB1 by recruiting EP300 and RB1 into a multimeric-protein complex. Interacts with host CTBP1 and CTBP2; this interaction seems to potentiate viral replication. Interacts with host DCAF7. Interacts with host DYRK1A. Interacts with host KPNA4; this interaction allows E1A import into the host nucleus. Interacts with host EP400; this interaction stabilizes MYC. Interacts with host TBP protein; this interaction probably disrupts the TBP-TATA complex.

The protein localises to the host nucleus. Plays a role in viral genome replication by driving entry of quiescent cells into the cell cycle. Stimulation of progression from G1 to S phase allows the virus to efficiently use the cellular DNA replicating machinery to achieve viral genome replication. E1A protein has both transforming and trans-activating activities. Induces the disassembly of the E2F1 transcription factor from RB1 by direct competition for the same binding site on RB1, with subsequent transcriptional activation of E2F1-regulated S-phase genes and of the E2 region of the adenoviral genome. Release of E2F1 leads to the ARF-mediated inhibition of MDM2 and causes TP53/p53 to accumulate because it is not targeted for degradation by MDM2-mediated ubiquitination anymore. This increase in TP53, in turn, would arrest the cell proliferation and direct its death but this effect is counteracted by the viral protein E1B-55K. Inactivation of the ability of RB1 to arrest the cell cycle is critical for cellular transformation, uncontrolled cellular growth and proliferation induced by viral infection. Interaction with RBX1 and CUL1 inhibits ubiquitination of the proteins targeted by SCF(FBXW7) ubiquitin ligase complex, and may be linked to unregulated host cell proliferation. The tumorigenesis-restraining activity of E1A may be related to the disruption of the host CtBP-CtIP complex through the CtBP binding motif. This chain is Early E1A protein, found in Canine adenovirus serotype 1 (strain RI261) (CAdV-1).